We begin with the raw amino-acid sequence, 200 residues long: ATP synthase subunit s, mitochondrial (200 aa).

Residues 1-25 constitute a mitochondrion transit peptide; that stretch reads MMLFGKISQQLCGVKKLPWSCDSRY. An N-terminal domain region spans residues 1–61; the sequence is MMLFGKISQQ…SEWLLRCGAM (61 aa). Mg(2+) is bound at residue G59. 4 LRR repeats span residues 62-87, 88-116, 117-141, and 142-173; these read VRYH…KYKI, QAID…KIRL, CKCH…KTIL, and EMEI…LSDL. T93 contacts Mg(2+).

It belongs to the ATP synthase subunit s family. In terms of assembly, homotetramer. Associates with ATP synthase.

The protein localises to the mitochondrion. Its subcellular location is the mitochondrion inner membrane. Functionally, involved in regulation of mitochondrial membrane ATP synthase. Necessary for H(+) conduction of ATP synthase. Facilitates energy-driven catalysis of ATP synthesis by blocking a proton leak through an alternative proton exit pathway. This chain is ATP synthase subunit s, mitochondrial (DMAC2L), found in Pongo abelii (Sumatran orangutan).